We begin with the raw amino-acid sequence, 1348 residues long: Vascular endothelial growth factor receptor 2 (1348 aa).

Positions 1 to 20 are cleaved as a signal peptide; the sequence is MELGPLRVLTVLLCLAPVFA. Residues 21–756 lie on the Extracellular side of the membrane; it reads GLFISMDQPT…GAEEKTNLEL (736 aa). Residues N43, N47, N63, N93, N138, N153, N201, N240, N290, N310, N365, N386, N513, N556, N603, N613, N622, N666, N688, and N710 are each glycosylated (N-linked (GlcNAc...) asparagine). 7 consecutive Ig-like C2-type domains span residues 43–106, 138–202, 220–312, 320–405, 412–534, 540–651, and 658–744; these read NDTL…GDSQ, NKTV…IDNE, DLTM…KNSS, PFIH…HTFT, PQIG…RVIS, GLEI…KHLT, and PRLV…AFFS. A disulfide bond links C50 and C100. C145 and C195 form a disulfide bridge. Cysteines 241 and 299 form a disulfide. The cysteines at positions 436 and 520 are disulfide-linked. C561 and C633 are oxidised to a cystine. Residues C679 and C728 are joined by a disulfide bond. Residues 757–777 form a helical membrane-spanning segment; the sequence is IILVGTAVIAMFFWLLLVIIL. Topologically, residues 778-1348 are cytoplasmic; sequence RTVKRANGGD…SPAPVASLPL (571 aa). Positions 825–1155 constitute a Protein kinase domain; it reads LKLGKPLGRG…FSELVEHLGN (331 aa). ATP-binding positions include 831-839 and K859; that span reads LGRGAFGQV. Low complexity predominate over residues 958-967; it reads ITSSQSSTSS. Residues 958-983 are disordered; sequence ITSSQSSTSSGFVEERSLSDVEEEDA. The active-site Proton acceptor is the D1021. 4 positions are modified to phosphotyrosine; by autocatalysis: Y1047, Y1052, Y1168, and Y1207. A disordered region spans residues 1280–1302; it reads PSKSNESVMSEASNQTSGYQSGY.

The protein belongs to the protein kinase superfamily. Tyr protein kinase family. CSF-1/PDGF receptor subfamily. In terms of processing, autophosphorylated on tyrosine residues upon ligand binding. Autophosphorylation occurs in trans, i.e. one subunit of the dimeric receptor phosphorylates tyrosine residues on the other subunit. In all endothelial tissues during onset of vascularization. In later development, present in lung, heart, intestine and skin.

Its subcellular location is the cell membrane. The protein localises to the cytoplasmic vesicle. The protein resides in the early endosome. It localises to the cell junction. It is found in the endoplasmic reticulum. The catalysed reaction is L-tyrosyl-[protein] + ATP = O-phospho-L-tyrosyl-[protein] + ADP + H(+). With respect to regulation, present in an inactive conformation in the absence of bound ligand. Binding of VEGFA, VEGFC or VEGFD leads to dimerization and activation by autophosphorylation on tyrosine residues. Tyrosine-protein kinase that acts as a cell-surface receptor for VEGFA, VEGFC and/or VEGFD and plays an essential role in the regulation of angiogenesis and vascular development. Promotes proliferation, survival, migration and differentiation of endothelial cells. Promotes reorganization of the actin cytoskeleton. Binding of vascular growth factors leads to the activation of several signaling cascades. Activation of PLCG1 leads to the production of the cellular signaling molecules diacylglycerol and inositol 1,4,5-trisphosphate and the activation of protein kinase C. Mediates activation of MAPK1/ERK2, MAPK3/ERK1 and the MAP kinase signaling pathway, as well as of the AKT1 signaling pathway. Mediates phosphorylation of PIK3R1, the regulatory subunit of phosphatidylinositol 3-kinase, reorganization of the actin cytoskeleton and activation of PTK2/FAK1. Required for VEGFA-mediated induction of NOS2 and NOS3, leading to the production of the signaling molecule nitric oxide (NO) by endothelial cells. This is Vascular endothelial growth factor receptor 2 from Coturnix japonica (Japanese quail).